A 422-amino-acid polypeptide reads, in one-letter code: uncharacterized protein (422 aa).

The protein belongs to the asfivirus K421R family.

Its subcellular location is the virion. This is an uncharacterized protein from Ornithodoros (relapsing fever ticks).